Consider the following 1683-residue polypeptide: E3 ubiquitin-protein ligase SHPRH (1683 aa).

The segment at methionine 1 to proline 43 is disordered. Residues arginine 12 to glutamate 32 are compositionally biased toward basic and acidic residues. Serine 266 carries the post-translational modification Phosphoserine. The Helicase ATP-binding; first part domain maps to tyrosine 307–threonine 389. Aspartate 373 to threonine 380 provides a ligand contact to ATP. An H15 domain is found at glutamine 438 to lysine 512. A disordered region spans residues lysine 525–serine 607. The span at isoleucine 534–aspartate 547 shows a compositional bias: basic and acidic residues. Over residues lysine 568–lysine 588 the composition is skewed to basic residues. At serine 635 the chain carries Phosphoserine. A PHD-type zinc finger spans residues arginine 658–alanine 709. In terms of domain architecture, Helicase ATP-binding; second part spans methionine 710–glutamate 868. The short motif at aspartate 819–glutamine 822 is the DEAQ box element. An RING-type zinc finger spans residues cysteine 1432–arginine 1479. The Helicase C-terminal domain occupies alanine 1514 to alanine 1672.

Belongs to the SNF2/RAD54 helicase family. In terms of assembly, homodimer. Interacts with HLTF, PCNA, UBE2N and RAD18. In terms of tissue distribution, broadly expressed.

It catalyses the reaction S-ubiquitinyl-[E2 ubiquitin-conjugating enzyme]-L-cysteine + [acceptor protein]-L-lysine = [E2 ubiquitin-conjugating enzyme]-L-cysteine + N(6)-ubiquitinyl-[acceptor protein]-L-lysine.. The protein operates within protein modification; protein ubiquitination. In terms of biological role, E3 ubiquitin-protein ligase involved in DNA repair. Upon genotoxic stress, accepts ubiquitin from the UBE2N-UBE2V2 E2 complex and transfers it to 'Lys-164' of PCNA which had been monoubiquitinated by UBE2A/B-RAD18, promoting the formation of non-canonical poly-ubiquitin chains linked through 'Lys-63'. This chain is E3 ubiquitin-protein ligase SHPRH (SHPRH), found in Homo sapiens (Human).